Here is a 79-residue protein sequence, read N- to C-terminus: Cyclin-dependent kinases regulatory subunit 2 (79 aa).

Lys-4 is modified (N6-acetyllysine).

It belongs to the CKS family. As to quaternary structure, forms a homohexamer that can probably bind six kinase subunits.

Binds to the catalytic subunit of the cyclin dependent kinases and is essential for their biological function. The chain is Cyclin-dependent kinases regulatory subunit 2 (Cks2) from Mus musculus (Mouse).